Consider the following 389-residue polypeptide: Agamous-like MADS-box protein AGL65 (389 aa).

Residues 1–61 (MGRVKLKIKR…GRATAFHGEH (61 aa)) form the MADS-box domain. Coiled-coil stretches lie at residues 77–131 (QERT…LMEC) and 293–325 (GMEEDQEKKIKSEMELNNLQQQQQQQQQQQQQD). Residues 310-343 (NLQQQQQQQQQQQQQDPSMYDPMANNNGGCFQIP) are disordered. Residues 312–324 (QQQQQQQQQQQQQ) are compositionally biased toward low complexity.

In terms of assembly, forms a heterodimer with AGL104. In terms of tissue distribution, expressed in pollen.

It localises to the nucleus. Probable transcription factor that forms a heterodimer with the MADS-box protein AGL104 and is involved in the regulation of pollen maturation at the late stages of pollen development and pollen tube growth. This is Agamous-like MADS-box protein AGL65 from Arabidopsis thaliana (Mouse-ear cress).